The chain runs to 222 residues: Putative serine proteinase inhibitor 2 homolog second part (222 aa).

Belongs to the serpin family. Poxviruses subfamily.

This is Putative serine proteinase inhibitor 2 homolog second part from Homo sapiens (Human).